The primary structure comprises 411 residues: Ferrochelatase, mitochondrial (411 aa).

A mitochondrion-targeting transit peptide spans 1–41 (MAAFRAAHRLLGHILRNESSAGLVTQRWSSSAAVASVPKSS). The tract at residues 34–55 (VASVPKSSDPKPHAQPDKRKPK) is disordered. Over residues 41–51 (SDPKPHAQPDK) the composition is skewed to basic and acidic residues. Protoporphyrin IX contacts are provided by R102, Y110, and S117. C183 lines the [2Fe-2S] cluster pocket. Residues H217 and D370 contribute to the active site. Positions 390, 393, and 398 each coordinate [2Fe-2S] cluster.

The protein belongs to the ferrochelatase family. In terms of assembly, homodimer. Homotetramer. The cofactor is [2Fe-2S] cluster.

It localises to the mitochondrion inner membrane. It catalyses the reaction heme b + 2 H(+) = protoporphyrin IX + Fe(2+). The protein operates within porphyrin-containing compound metabolism; protoheme biosynthesis; protoheme from protoporphyrin-IX: step 1/1. In terms of biological role, catalyzes the ferrous insertion into protoporphyrin IX. In Xenopus laevis (African clawed frog), this protein is Ferrochelatase, mitochondrial.